Here is a 416-residue protein sequence, read N- to C-terminus: CinA-like protein (416 aa).

This sequence belongs to the CinA family.

This Solibacter usitatus (strain Ellin6076) protein is CinA-like protein.